An 83-amino-acid polypeptide reads, in one-letter code: Cobrotoxin (83 aa).

The N-terminal stretch at 1 to 21 (MKTLLLTLLVVTIVCLDLGYT) is a signal peptide. 4 disulfide bridges follow: C24–C45, C38–C62, C64–C75, and C76–C81.

This sequence belongs to the three-finger toxin family. Short-chain subfamily. Type I alpha-neurotoxin sub-subfamily. In terms of tissue distribution, expressed by the venom gland.

It is found in the secreted. Functionally, binds to muscle nicotinic acetylcholine receptor (nAChR) and inhibit acetylcholine from binding to the receptor, thereby impairing neuromuscular transmission. Has a higher toxicity than cobrotoxin-b. In vivo, when tested on rat arthritis models, shows anti-inflammation and immunosuppression effects. The chain is Cobrotoxin from Naja atra (Chinese cobra).